Consider the following 139-residue polypeptide: Large ribosomal subunit protein uL16 (139 aa).

This sequence belongs to the universal ribosomal protein uL16 family. In terms of assembly, part of the 50S ribosomal subunit.

Binds 23S rRNA and is also seen to make contacts with the A and possibly P site tRNAs. The protein is Large ribosomal subunit protein uL16 of Treponema pallidum (strain Nichols).